The primary structure comprises 482 residues: Wax ester synthase/diacylglycerol acyltransferase 9 (482 aa).

Topologically, residues 1 to 195 are cytoplasmic; that stretch reads MEKKMKEEEE…FRLVLVVCST (195 aa). Residue His-140 is the Proton acceptor of the active site. Residues 196–216 form a helical membrane-spanning segment; it reads VRLIWNTLVDSFLCMATIFFL. At 217–328 the chain is on the lumenal side; the sequence is KDTDTPLKGK…AKGSKCRWGN (112 aa). A helical membrane pass occupies residues 329–349; the sequence is YISVILFPFTIALQSDPLVYL. Residues 350-366 lie on the Cytoplasmic side of the membrane; that stretch reads SNVKSMIDRKKNSLITY. A helical transmembrane segment spans residues 367-387; that stretch reads IIYTFSEFVIKAFGINVAVAF. Residues 388–482 are Lumenal-facing; that stretch reads QRKIMLNTTM…LEKGLPNHVN (95 aa). Asn-394 carries an N-linked (GlcNAc...) asparagine glycan.

This sequence in the N-terminal section; belongs to the long-chain O-acyltransferase family. Mostly expressed in stems and siliques.

Its subcellular location is the cell membrane. It localises to the endoplasmic reticulum membrane. It catalyses the reaction an acyl-CoA + a 1,2-diacyl-sn-glycerol = a triacyl-sn-glycerol + CoA. It carries out the reaction a long chain fatty alcohol + a fatty acyl-CoA = a wax ester + CoA. It functions in the pathway glycerolipid metabolism; triacylglycerol biosynthesis. Its pathway is lipid metabolism. In terms of biological role, bifunctional wax ester synthase/diacylglycerol acyltransferase. Involved in cuticular wax biosynthesis. This is Wax ester synthase/diacylglycerol acyltransferase 9 from Arabidopsis thaliana (Mouse-ear cress).